The primary structure comprises 478 residues: Growth/differentiation factor 10 (478 aa).

The first 33 residues, 1–33 (MARGPARTSLGPGSQQLPLLSLLLLLLLRDADG), serve as a signal peptide directing secretion. Residues 34–70 (SHTAAARPPPPAAADGLAGDKNPQRSPGDVAAAQSPG) form a disordered region. The propeptide occupies 34–368 (SHTAAARPPP…EKTMQKARKK (335 aa)). N-linked (GlcNAc...) asparagine glycans are attached at residues N118, N155, and N280. The interval 267–345 (PFQAGDPEPG…GRKDRRKKGQ (79 aa)) is disordered. Residues 291 to 301 (TQATGPLQNNE) show a composition bias toward polar residues. Residues 331–343 (LKPRPGRKDRRKK) are compositionally biased toward basic residues. 3 disulfide bridges follow: C376–C443, C405–C475, and C409–C477. N469 is a glycosylation site (N-linked (GlcNAc...) asparagine).

This sequence belongs to the TGF-beta family. As to quaternary structure, homodimer or heterodimer. Can form a non-covalent complex of the mature region and the pro-region.

Its subcellular location is the secreted. Functionally, growth factor involved in osteogenesis and adipogenesis. Plays an inhibitory role in the process of osteoblast differentiation via SMAD2/3 pathway. Plays an inhibitory role in the process of adipogenesis. This Bos taurus (Bovine) protein is Growth/differentiation factor 10 (GDF10).